The chain runs to 199 residues: Oligoribonuclease (199 aa).

In terms of domain architecture, Exonuclease spans 5–170; the sequence is LVWIDCEMTG…ADIRESIREL (166 aa). Tyr127 is a catalytic residue.

This sequence belongs to the oligoribonuclease family.

The protein localises to the cytoplasm. Its function is as follows. 3'-to-5' exoribonuclease specific for small oligoribonucleotides. This is Oligoribonuclease from Rhodococcus jostii (strain RHA1).